We begin with the raw amino-acid sequence, 98 residues long: Sm-like protein LSM8 (98 aa).

The 77-residue stretch at 2 to 78 folds into the Sm domain; the sequence is AATTGLETLV…IGVIGELDEE (77 aa).

Belongs to the snRNP Sm proteins family. Component of the heptameric LSM2-LSM8 complex that forms a seven-membered ring structure with a donut shape. The LSM subunits are arranged in the order LSM8, LSM2, LSM3, LSM6, LSM5, LSM7 and LSM4. LSM8 subunit interacts only with its two neighboring subunits, LSM2 and LSM4. Interacts with the prefoldin co-chaperone subunits PFD1, PFD2, PFD3, PFD4, PFD5 and PFD6. In terms of tissue distribution, expressed in roots, leaves, stems, flowers and siliques.

The protein resides in the nucleus. In terms of biological role, component of the nuclear LSM2-LSM8 complex which is involved splicing nuclear mRNAs. LSM2-LSM8 binds directly to the U6 small nuclear RNAs (snRNAs). LSM8 is essential for the formation of the nuclear LSM2-LSM8 complex involved in the accurate splicing of selected development-related mRNAs through the stabilization of the spliceosomal U6 snRNA. Plays a critical role in the regulation of development-related gene expression. This is Sm-like protein LSM8 from Arabidopsis thaliana (Mouse-ear cress).